Consider the following 220-residue polypeptide: uncharacterized protein (220 aa).

7 helical membrane passes run 25 to 45, 50 to 70, 74 to 94, 105 to 125, 135 to 155, 158 to 178, and 196 to 216; these read YFLL…SMSL, PGLI…YKLS, LGIL…GPIL, IVVL…AYVL, SGTI…SFFF, PMLY…GILY, and VSIF…FSIL.

This sequence belongs to the BI1 family.

Its subcellular location is the cell membrane. This is an uncharacterized protein from Pasteurella multocida (strain Pm70).